The following is a 52-amino-acid chain: uncharacterized protein (52 aa).

The disordered stretch occupies residues 1 to 52; sequence MVNNDAKIGRREFYDRVESVRPKSPPRERPTYTYSNSRTVDGYSNRGPRADF. The span at 7–30 shows a compositional bias: basic and acidic residues; the sequence is KIGRREFYDRVESVRPKSPPRERP.

This is an uncharacterized protein from Dictyostelium discoideum (Social amoeba).